Consider the following 598-residue polypeptide: Serine hydroxymethyltransferase 7 (598 aa).

Residues 57–85 (QLLEQKAEKTTTVDEPKKDGGGGGDQKED) are disordered. Residues 61–85 (QKAEKTTTVDEPKKDGGGGGDQKED) are compositionally biased toward basic and acidic residues. At K370 the chain carries N6-(pyridoxal phosphate)lysine.

Belongs to the SHMT family. In terms of assembly, homotetramer. It depends on pyridoxal 5'-phosphate as a cofactor.

It localises to the cytoplasm. The enzyme catalyses (6R)-5,10-methylene-5,6,7,8-tetrahydrofolate + glycine + H2O = (6S)-5,6,7,8-tetrahydrofolate + L-serine. Its pathway is one-carbon metabolism; tetrahydrofolate interconversion. In terms of biological role, catalyzes the interconversion of serine and glycine. The protein is Serine hydroxymethyltransferase 7 (SHM7) of Arabidopsis thaliana (Mouse-ear cress).